The following is a 608-amino-acid chain: Cilia- and flagella-associated protein 100 (608 aa).

Over residues 1-17 (MSETLSNIVSKNMTNDK) the composition is skewed to polar residues. Residues 1–57 (MSETLSNIVSKNMTNDKNSLESMNISSSSSAEENPKKQAKKXKERGPDPSANPFHLS) are disordered. Over residues 20–32 (LESMNISSSSSAE) the composition is skewed to low complexity. Coiled coils occupy residues 164–196 (TLDC…LAKD) and 230–257 (LEIR…QHYK). Disordered stretches follow at residues 291–320 (ASKD…AKEG) and 339–377 (LSSP…GEEP). Low complexity predominate over residues 339-361 (LSSPQQGSQPSESSGGNSRGSNS). Coiled-coil stretches lie at residues 385–435 (QQLL…QLKQ) and 500–575 (TVQM…RGRT).

It belongs to the CFAP100 family.

It is found in the cytoplasm. The protein resides in the cytoskeleton. It localises to the cilium axoneme. In terms of biological role, may play a role in ciliary/flagellar motility by regulating the assembly and the activity of axonemal inner dynein arm. The polypeptide is Cilia- and flagella-associated protein 100 (Macaca fascicularis (Crab-eating macaque)).